Reading from the N-terminus, the 144-residue chain is Maximins 3/H11 type 1 (144 aa).

The first 18 residues, 1–18 (MNFKYIVAVSFLIASAYA), serve as a signal peptide directing secretion. 2 consecutive propeptides follow at residues 19–43 (RSVQ…REIR) and 73–122 (RTAE…KKEK). Residue Ile143 is modified to Isoleucine amide.

It belongs to the bombinin family. As to expression, expressed by the skin glands.

The protein resides in the secreted. Its function is as follows. Maximin-3 shows antibacterial activity against both Gram-positive and Gram-negative bacteria. It also shows antimicrobial activity against the fungus C.albicans, but not against A.flavus nor P.uticale. It has little hemolytic activity. It possess a significant cytotoxicity against tumor cell lines. It possess a significant anti-HIV activity. It shows high spermicidal activity. Functionally, maximin-H11 shows antimicrobial activity against bacteria and against the fungus C.albicans. Shows strong hemolytic activity. The protein is Maximins 3/H11 type 1 of Bombina maxima (Giant fire-bellied toad).